Consider the following 109-residue polypeptide: Large ribosomal subunit protein uL22 (109 aa).

The segment covering Ala-84–Thr-95 has biased composition (basic residues). Residues Ala-84–Ala-109 are disordered.

The protein belongs to the universal ribosomal protein uL22 family. Part of the 50S ribosomal subunit.

Its function is as follows. This protein binds specifically to 23S rRNA; its binding is stimulated by other ribosomal proteins, e.g. L4, L17, and L20. It is important during the early stages of 50S assembly. It makes multiple contacts with different domains of the 23S rRNA in the assembled 50S subunit and ribosome. In terms of biological role, the globular domain of the protein is located near the polypeptide exit tunnel on the outside of the subunit, while an extended beta-hairpin is found that lines the wall of the exit tunnel in the center of the 70S ribosome. The protein is Large ribosomal subunit protein uL22 of Campylobacter hominis (strain ATCC BAA-381 / DSM 21671 / CCUG 45161 / LMG 19568 / NCTC 13146 / CH001A).